The following is a 284-amino-acid chain: Stomatin (284 aa).

Topologically, residues 1-31 are cytoplasmic; that stretch reads MSDKRQSSHVQSQRIPESFRENSKTELGACG. Ser18 carries the post-translational modification Phosphoserine. A lipid anchor (S-palmitoyl cysteine) is attached at Cys30. The stretch at 32 to 52 is an intramembrane region; the sequence is WILVAASFFFVIITFPISIWI. The Cytoplasmic segment spans residues 53–284; it reads CIKIVKEYER…MLQGIMGSNH (232 aa). Residue Cys87 is the site of S-palmitoyl cysteine attachment. A phosphoserine mark is found at Ser161 and Ser244. The interval 265–273 is required for homooligomerization; that stretch reads STIVFPLPV. A required for lipid raft association region spans residues 267-269; the sequence is IVF. Residues 273-284 are interaction with LANCL1; the sequence is VDMLQGIMGSNH.

Belongs to the band 7/mec-2 family. In terms of assembly, interacts with LANCL1. Interacts with SLC2A1. Interacts with SLC4A1; this interaction positively regulates SLC4A1 activity. Identified in large complexes with SLC40A1, SLC14A1, SLC29A1 and AQP1. Homodimer and higher order homooligomers. The homodimer is banana-shaped. Interacts with ASIC1, ASIC2 and ASIC3. Interacts with STOML1; may redistribute STOM from the plasma membrane to late endosomes. In terms of tissue distribution, expressed in all sensory neurons of the dorsal root ganglia. In the CNS, expressed in many neurons of the spinal cord, medulla and pons. Expressed only in scattered neurons in the cortex, hippocampus, thalamus and basal ganglia. In the cerebellum, expressed in all Purkinje cells (at protein level). Widely expressed with high levels in heart, liver, skeletal muscle and testis and low levels in lung, brain and spleen.

The protein resides in the cell membrane. Its subcellular location is the cytoplasm. The protein localises to the cytoskeleton. It is found in the membrane raft. It localises to the melanosome. The protein resides in the cytoplasmic vesicle. Functionally, regulates ion channel activity and transmembrane ion transport. Regulates ASIC2 and ASIC3 channel activity. This Mus musculus (Mouse) protein is Stomatin.